We begin with the raw amino-acid sequence, 368 residues long: MMTMWCLTLFVLWMLRVVGMHVLRYGYTGIFDDTSHMTLTVVGIFDGQHFFTYHVNSSDKASSRANGTISWMANVSAAYPTYLDGERAKGDLIFNQTEQNLLELEIALGYRSQSVLTWTHECNTTENGSFVAGYEGFGWDGETLMELKDNLTLWTGPNYEISWLKQNKTYIDGKIKNISEGDTTIQRNYLKGNCTQWSVIYSGFQPPVTHPVVKGGVRNQNDNRAEAFCTSYGFFPGEINITFIHYGDKVPEDSEPQCNPLLPTLDGTFHQGCYVAIFCNQNYTCRVTHGNWTVEIPISVTSPDDSSSGEVPDHPTANKRYNTMTISSVLLALLLCALLFAFLHYFTTLKQYLRNLAFAWRYRKVRSS.

Residues 1–18 form the signal peptide; the sequence is MMTMWCLTLFVLWMLRVV. Residues 19–114 form an alpha-1-like region; it reads GMHVLRYGYT…EIALGYRSQS (96 aa). Residues N56, N66, N74, N95, N123, N127, N150, N167, N177, N193, N240, N282, and N291 are each glycosylated (N-linked (GlcNAc...) asparagine; by host). The alpha-2-like stretch occupies residues 115-208; sequence VLTWTHECNT…VIYSGFQPPV (94 aa). Residues 209–303 are alpha-3-like; it reads THPVVKGGVR…VEIPISVTSP (95 aa). A helical membrane pass occupies residues 321–342; sequence YNTMTISSVLLALLLCALLFAF.

In terms of assembly, interacts with host LILRB1.

The protein localises to the host membrane. Its function is as follows. Plays a role in the protection against host NK cell cytotoxicity by interacting with and modulating the activity of the host inhibitory leukocyte Ig-like receptor 1/LILRB1, which is expressed on monocytes, dendritic cells, as well as subsets of T and NK cells. UL18 exerts an inhibitory effect on LIR-1+ NK cells, while it stimulates LIR-1- NK cell. These modulations prevent lysis of the infected cells by NK cells. The chain is Glycoprotein UL18 (H301) from Homo sapiens (Human).